A 279-amino-acid chain; its full sequence is MRGKMKLSFIENDSVRKTTFTKRKKGMLKKFNELVTLCGVDACAVIRSPYNSIQEPWPSREGVEEVMSKFMEFSVLDRTKKMVDQETFLRQRIAKETERLQKLRDENRNSQIRDLMFGCLKGEVDVSHLHGRDLLDLNVFLNKYLNGVIRRVEILKENGESSSSVPPPIGVAPTVVDASVPIGFDGRMIQDQNQNQQEPVQFQYQALYDFYDQIPKKLHDFNMKMNIDPNQSMNLDLNDGEDEGIPCMDNNNYHPEIDCLATVTTAPTDVCAPNIINDL.

The region spanning M1–R60 is the MADS-box domain.

In terms of assembly, interacts with AGL61/DIANA and AGL62. In terms of tissue distribution, male gametophyte, embryo and endosperm.

It is found in the nucleus. Its function is as follows. Probable transcription factor involved in the development of gametophytes and seeds. In Arabidopsis thaliana (Mouse-ear cress), this protein is MADS-box transcription factor PHERES 1 (PHE1).